The following is a 304-amino-acid chain: MKLLLFGYGNVGKAFRKLLHEKRSPELNDVIIGGIVTRRGIMLQDKEDFTPDLEGDVFKAFEKIKPDIIVDVSSANYNNGEPSLSLYKEAIKDGVNIITTNKAPLALAFNEIFSLARSKGVKIGFQGTVMSGTPSINLYRVLPGSRVIKIRGILNGTTNFILTLMNKGVSFEEALKEAQRRGYAEEDPTLDINGFDAAAKITILANFMIGNSVTIKDVKFEGINRDLPKNEKIKLIAYADEKEVWVKPLPISQDDPLYNVDGVENALEITTDIQSILIRGPGAGPVNAAYGALSDLILLKRDCL.

Tyr-8, Asn-10, Val-11, Arg-38, Arg-39, and Ser-73 together coordinate NADP(+). An NADPH-binding site is contributed by Tyr-8. 2 residues coordinate NADPH: Val-11 and Arg-38. Val-11 contributes to the NAD(+) binding site. NADPH-binding residues include Ser-73, Ser-74, Thr-100, and Lys-102. An NAD(+)-binding site is contributed by Ser-73. The NADP(+) site is built by Thr-100 and Lys-102. Residues Val-129 and Thr-133 each coordinate Na(+). The NADP(+) site is built by Gly-182 and Glu-185. Glu-185 and Asp-196 together coordinate L-homoserine. The active-site Proton donor is Lys-200. An NADP(+)-binding site is contributed by Gly-284. Gly-284 contributes to the NADPH binding site. Gly-284 is an NAD(+) binding site.

This sequence belongs to the homoserine dehydrogenase family. Homodimer. It depends on a metal cation as a cofactor. The enzyme is activated by reductive cleavage of the interchain disulfide bond between the two subunits.

It carries out the reaction L-homoserine + NADP(+) = L-aspartate 4-semialdehyde + NADPH + H(+). It catalyses the reaction L-homoserine + NAD(+) = L-aspartate 4-semialdehyde + NADH + H(+). It participates in amino-acid biosynthesis; L-methionine biosynthesis via de novo pathway; L-homoserine from L-aspartate: step 3/3. Its pathway is amino-acid biosynthesis; L-threonine biosynthesis; L-threonine from L-aspartate: step 3/5. With respect to regulation, inhibited by cysteine. Functionally, catalyzes the conversion of L-aspartate-beta-semialdehyde (L-Asa) to L-homoserine (L-Hse), the third step in the biosynthesis of threonine and methionine from aspartate. The protein is Homoserine dehydrogenase of Sulfurisphaera tokodaii (strain DSM 16993 / JCM 10545 / NBRC 100140 / 7) (Sulfolobus tokodaii).